Reading from the N-terminus, the 156-residue chain is Small ribosomal subunit protein uS7 (156 aa).

This sequence belongs to the universal ribosomal protein uS7 family. As to quaternary structure, part of the 30S ribosomal subunit. Contacts proteins S9 and S11.

Its function is as follows. One of the primary rRNA binding proteins, it binds directly to 16S rRNA where it nucleates assembly of the head domain of the 30S subunit. Is located at the subunit interface close to the decoding center, probably blocks exit of the E-site tRNA. This Pseudoalteromonas translucida (strain TAC 125) protein is Small ribosomal subunit protein uS7.